The chain runs to 260 residues: Dehydrogenase/reductase SDR family member 11 (260 aa).

The first 30 residues, Met1–Ala30, serve as a signal peptide directing secretion. NADP(+)-binding positions include Gly18–Ile23, Arg43–Thr44, Glu49, Asp70–Leu71, and Asn97. Substrate contacts are provided by Ser151 and Tyr166. Residues Tyr166, Lys170, Val201–Gln204, and Lys208 each bind NADP(+). The active-site Proton acceptor is Tyr166.

This sequence belongs to the short-chain dehydrogenases/reductases (SDR) family. As to quaternary structure, homotetramer. In terms of tissue distribution, isoform 1: Ubiquitously expressed, with highest levels in testis, small intestine, colon, kidney, brain and heart. Isoform 3: Expressed in brain, heart and skeletal muscle.

It is found in the secreted. It catalyses the reaction a 3beta-hydroxysteroid + NADP(+) = a 3-oxosteroid + NADPH + H(+). It carries out the reaction 17beta-estradiol + NAD(+) = estrone + NADH + H(+). The catalysed reaction is 17beta-estradiol + NADP(+) = estrone + NADPH + H(+). It participates in steroid biosynthesis; estrogen biosynthesis. Its activity is regulated as follows. Inhibited by flavonoids including apigenin, luteolin, genistein, kaempferol and quercetin and also by carbenoxolone, zearalenone, glycyrrhetinic, curcumin and flufenamic acid. In terms of biological role, catalyzes the conversion of the 17-keto group of estrone, 4- and 5-androstenes and 5-alpha-androstanes into their 17-beta-hydroxyl metabolites and the conversion of the 3-keto group of 3-, 3,17- and 3,20- diketosteroids into their 3-hydroxyl metabolites. Exhibits reductive 3-beta-hydroxysteroid dehydrogenase activity toward 5-beta-androstanes, 5-beta-pregnanes, 4-pregnenes and bile acids. May also reduce endogenous and exogenous alpha-dicarbonyl compounds and xenobiotic alicyclic ketones. The sequence is that of Dehydrogenase/reductase SDR family member 11 (DHRS11) from Homo sapiens (Human).